The chain runs to 22 residues: Peptide PGLa-BM3 (22 aa).

Leucine amide is present on leucine 22.

Expressed by the skin glands.

The protein localises to the secreted. Antimicrobial peptide. This chain is Peptide PGLa-BM3, found in Xenopus boumbaensis (Mawa clawed frog).